A 242-amino-acid chain; its full sequence is Type III pantothenate kinase (242 aa).

6-13 (DAGNTRIK) contributes to the ATP binding site. Residues Tyr-90 and 97 to 100 (GADR) each bind substrate. Residue Asp-99 is the Proton acceptor of the active site. An ATP-binding site is contributed by Thr-122. Thr-172 is a substrate binding site.

Belongs to the type III pantothenate kinase family. As to quaternary structure, homodimer. Requires NH4(+) as cofactor. K(+) serves as cofactor.

It is found in the cytoplasm. The enzyme catalyses (R)-pantothenate + ATP = (R)-4'-phosphopantothenate + ADP + H(+). Its pathway is cofactor biosynthesis; coenzyme A biosynthesis; CoA from (R)-pantothenate: step 1/5. In terms of biological role, catalyzes the phosphorylation of pantothenate (Pan), the first step in CoA biosynthesis. This chain is Type III pantothenate kinase, found in Aromatoleum aromaticum (strain DSM 19018 / LMG 30748 / EbN1) (Azoarcus sp. (strain EbN1)).